A 317-amino-acid chain; its full sequence is MIREKTNKISIIGAGFVGSTTAFALMQDGLASEIVIVDINKDKAHAEAMDLAQGAAFVKSVDIKSGDYADTKDSDIVIITAGVGPKPGETRLDIINKNLKIFKSIVPEVVKYSPNSILLVVSNPVDILTYITYKLSGFPKERVVGSGTVLDTSRLKYMLSEHFDIDARNVHTYIIGEHGDSEITAWSLTNIAGANVDEYCKTVCANCDGSFKKELPEKVKNAAYEIINSKGYTNYAVALAVTRIVEAILRDENAILTVSSLFEGQYGIDNVYLAMPTIVDRSGARQILDVPISNEEKENLIKSAEILKGHIANSELD.

NAD(+)-binding positions include Val17, Asp38, Lys43, Tyr68, and 82–83 (GV). Arg91 is a substrate binding site. NAD(+) contacts are provided by residues Ser104, 121–123 (VSN), and Ser146. 123–126 (NPVD) serves as a coordination point for substrate. 151–154 (DTSR) contacts substrate. 2 residues coordinate beta-D-fructose 1,6-bisphosphate: Lys156 and His171. His178 serves as the catalytic Proton acceptor. Tyr224 is subject to Phosphotyrosine. Residue Thr233 participates in substrate binding.

It belongs to the LDH/MDH superfamily. LDH family. Homotetramer.

It is found in the cytoplasm. The enzyme catalyses (S)-lactate + NAD(+) = pyruvate + NADH + H(+). It functions in the pathway fermentation; pyruvate fermentation to lactate; (S)-lactate from pyruvate: step 1/1. Its activity is regulated as follows. Allosterically activated by fructose 1,6-bisphosphate (FBP). Functionally, catalyzes the conversion of lactate to pyruvate. In Clostridium perfringens (strain SM101 / Type A), this protein is L-lactate dehydrogenase.